Consider the following 102-residue polypeptide: Large ribosomal subunit protein bL21 (102 aa).

This sequence belongs to the bacterial ribosomal protein bL21 family. As to quaternary structure, part of the 50S ribosomal subunit. Contacts protein L20.

Functionally, this protein binds to 23S rRNA in the presence of protein L20. The chain is Large ribosomal subunit protein bL21 from Bacillus anthracis (strain A0248).